The primary structure comprises 127 residues: Fluoride-specific ion channel FluC 1 (127 aa).

4 consecutive transmembrane segments (helical) span residues 3-23, 35-55, 74-94, and 102-122; these read LLIV…VGQW, IAML…FGLY, IGFF…VLLI, and LFSY…LGFY. Na(+) is bound by residues Gly-78 and Thr-81.

It belongs to the fluoride channel Fluc/FEX (TC 1.A.43) family.

The protein resides in the cell membrane. The catalysed reaction is fluoride(in) = fluoride(out). With respect to regulation, na(+) is not transported, but it plays an essential structural role and its presence is essential for fluoride channel function. Functionally, fluoride-specific ion channel. Important for reducing fluoride concentration in the cell, thus reducing its toxicity. This Halalkalibacterium halodurans (strain ATCC BAA-125 / DSM 18197 / FERM 7344 / JCM 9153 / C-125) (Bacillus halodurans) protein is Fluoride-specific ion channel FluC 1.